The following is a 258-amino-acid chain: Uridylate cyclase (258 aa).

The Guanylate cyclase domain maps to 50-190; that stretch reads AAIFIDLRGS…DVVNKASKMC (141 aa). Phe53 contacts a ribonucleoside 5'-triphosphate. Mn(2+)-binding residues include Asp55 and Asp102.

This sequence belongs to the adenylyl cyclase class-4/guanylyl cyclase family. Pyrimidine cyclase subfamily. As to quaternary structure, homodimer. The cofactor is Mn(2+).

It is found in the cytoplasm. It catalyses the reaction UTP = 3',5'-cyclic UMP + diphosphate. Its function is as follows. Pycsar (pyrimidine cyclase system for antiphage resistance) provides immunity against bacteriophage. The pyrimidine cyclase (PycC) synthesizes cyclic nucleotides in response to infection; these serve as specific second messenger signals. The signals activate the adjacent effector, leading to bacterial cell death and abortive phage infection. A clade C Pycsar system. The pyrimidine cyclase gene of a two-gene Pycsar system, weakly generates cyclic UMP (cUMP) from UTP, has little to no activity on ATP, CTP or GTP. Expression of this and adjacent effector GmPycTM (AC P0DV43) probably confers resistance to bacteriophage. The genes are probably only expressed in response to bacteriophage infection. The polypeptide is Uridylate cyclase (Gulbenkiania mobilis).